Reading from the N-terminus, the 389-residue chain is NADH-quinone oxidoreductase subunit D (389 aa).

This sequence belongs to the complex I 49 kDa subunit family. NDH-1 is composed of 14 different subunits. Subunits NuoB, C, D, E, F, and G constitute the peripheral sector of the complex.

The protein resides in the cell inner membrane. It catalyses the reaction a quinone + NADH + 5 H(+)(in) = a quinol + NAD(+) + 4 H(+)(out). NDH-1 shuttles electrons from NADH, via FMN and iron-sulfur (Fe-S) centers, to quinones in the respiratory chain. The immediate electron acceptor for the enzyme in this species is believed to be ubiquinone. Couples the redox reaction to proton translocation (for every two electrons transferred, four hydrogen ions are translocated across the cytoplasmic membrane), and thus conserves the redox energy in a proton gradient. The sequence is that of NADH-quinone oxidoreductase subunit D from Rickettsia prowazekii (strain Madrid E).